The following is a 526-amino-acid chain: Opine oxidase subunit A (526 aa).

Residues C396, C398, C431, and C436 each contribute to the [2Fe-2S] cluster site.

The protein to T-protein and to dimethylglycine dehydrogenase. Heterodimer of a subunit A and a subunit B. [2Fe-2S] cluster serves as cofactor.

It functions in the pathway opine metabolism; octopine degradation. Oxidative cleavage of octopine into L-arginine and pyruvate. The polypeptide is Opine oxidase subunit A (ooxA) (Rhizobium meliloti (Ensifer meliloti)).